A 122-amino-acid polypeptide reads, in one-letter code: Large ribosomal subunit protein uL14 (122 aa).

The protein belongs to the universal ribosomal protein uL14 family. As to quaternary structure, part of the 50S ribosomal subunit. Forms a cluster with proteins L3 and L19. In the 70S ribosome, L14 and L19 interact and together make contacts with the 16S rRNA in bridges B5 and B8.

Binds to 23S rRNA. Forms part of two intersubunit bridges in the 70S ribosome. The polypeptide is Large ribosomal subunit protein uL14 (Bartonella bacilliformis (strain ATCC 35685 / KC583 / Herrer 020/F12,63)).